The following is a 392-amino-acid chain: Galactokinase (392 aa).

Alpha-D-galactose is bound by residues Arg37, Glu43, His44, and Asp46. The ATP site is built by Gly136, Gly138, Ser140, and Ser141. An alpha-D-galactose-binding site is contributed by Asp186. Catalysis depends on Asp186, which acts as the Proton acceptor. Ser230 is subject to Phosphoserine. Tyr236 is an alpha-D-galactose binding site.

The protein belongs to the GHMP kinase family. GalK subfamily. Homodimer.

It catalyses the reaction alpha-D-galactose + ATP = alpha-D-galactose 1-phosphate + ADP + H(+). It functions in the pathway carbohydrate metabolism; galactose metabolism. Functionally, catalyzes the transfer of a phosphate from ATP to alpha-D-galactose and participates in the first committed step in the catabolism of galactose. In Canis lupus familiaris (Dog), this protein is Galactokinase (GALK1).